Consider the following 222-residue polypeptide: MVHVVMMVFLLIVLILCSSTVGYDYFQFTQQYQLAVCNSNRTLCKDPPDKLFTVHGLWPSNMVGPDPSKCPIKNIRKREKLLEHQLEIIWPNVFDRTKNNLFWDKEWMKHGSCGYPTIDNENHYFETVIKMYISKKQNVSRILSKAKIEPDGKKRALLDIENAIRNGADNKKPKLKCQKKGTTTELVEITLCSDKSGEHFIDCPHPFEPISPHYCPTNNIKY.

Residues 1–22 form the signal peptide; the sequence is MVHVVMMVFLLIVLILCSSTVG. Q31 lines the RNA pocket. C37 and C44 are disulfide-bonded. N-linked (GlcNAc...) asparagine glycosylation occurs at N40. RNA contacts are provided by residues H55, 92 to 93, F102, 105 to 106, and 109 to 110; these read NV, KE, and KH. H55 functions as the Proton donor in the catalytic mechanism. C70 and C113 are joined by a disulfide. Catalysis depends on residues E106 and K109. H110 acts as the Proton acceptor in catalysis. N138 carries an N-linked (GlcNAc...) asparagine glycan. Cystine bridges form between C177-C215 and C192-C203.

The protein belongs to the RNase T2 family. Post-translationally, N-linked core structure at Asn-138 contains xylose.

The catalysed reaction is a ribonucleotidyl-ribonucleotide-RNA + H2O = a 3'-end 3'-phospho-ribonucleotide-RNA + a 5'-end dephospho-ribonucleoside-RNA + H(+). Self-incompatibility (SI) is the inherited ability of a flowering plant to prevent self-fertilization by discriminating between self and non-self pollen during pollination. In many species, self-incompatibility is controlled by the single, multiallelic locus S. In Pyrus pyrifolia (Chinese pear), this protein is Ribonuclease S-3.